The following is a 210-amino-acid chain: MAASVEQREGTIQVQGQALFFREALPGSGQARFSVLLLHGIRFSSETWQNLGTLHRLAQAGYRAVAIDLPGLGHSKEAAAPAPIGELAPGSFLAAVVDALELGPPVVISPSLSGMYSLPFLTAPGSQLPGFVPVAPICTDKINAANYASVKTPALIVYGDQDPMGQTSFEHLKQLPNHRVLIMKGAGHPCYLDKPEEWHTGLLDFLQGLQ.

An N-acetylalanine modification is found at Ala-2. Ser-91 bears the Phosphoserine mark. Residues Ser-111, Asp-162, and His-188 each act as charge relay system in the active site.

Belongs to the AB hydrolase superfamily. ABHD14 family. In terms of assembly, may interact with TAF1. Ubiquitous. Detected in spleen, thymus, prostate, testis, ovary, small intestine, colon, peripheral blood leukocyte, heart, placenta, lung, liver, skeletal muscle, pancreas and kidney.

The protein localises to the cytoplasm. It localises to the nucleus. The enzyme catalyses L-lysyl-[protein] + acetyl-CoA = N(6)-acetyl-L-lysyl-[protein] + CoA + H(+). Its function is as follows. Acts as an atypical protein-lysine deacetylase in vitro. Catalyzes the deacetylation of lysine residues using CoA as substrate, generating acetyl-CoA and the free amine of protein-lysine residues. Additional experiments are however required to confirm the protein-lysine deacetylase activity in vivo. Has hydrolase activity towards various surrogate p-nitrophenyl (pNp) substrates, such as pNp-butyrate, pNp-acetate and pNp-octanoate in vitro, with a strong preference for pNp-acetate. May activate transcription. The protein is Putative protein-lysine deacylase ABHD14B of Homo sapiens (Human).